We begin with the raw amino-acid sequence, 620 residues long: Zinc metalloproteinase-disintegrin-like ACLD (620 aa).

A signal peptide spans 1–20 (MIQVLLVTLCLAVFPYQGSS). The propeptide occupies 21–189 (IILESGNVND…KKASQLNLTP (169 aa)). Positions 199-395 (KYVEFVVVLD…RRPKCILNEP (197 aa)) constitute a Peptidase M12B domain. Glu202 is a binding site for Ca(2+). N-linked (GlcNAc...) asparagine glycans are attached at residues Asn259 and Asn265. Asp286 serves as a coordination point for Ca(2+). 3 cysteine pairs are disulfide-bonded: Cys310–Cys390, Cys350–Cys374, and Cys352–Cys357. His335 serves as a coordination point for Zn(2+). Glu336 is an active-site residue. The Zn(2+) site is built by His339 and His345. N-linked (GlcNAc...) asparagine glycosylation occurs at Asn373. Ca(2+) is bound by residues Cys390 and Asn393. Asn396 carries N-linked (GlcNAc...) asparagine glycosylation. In terms of domain architecture, Disintegrin spans 403-489 (PPVCGNELLE…ECPTDRFQRN (87 aa)). 6 residues coordinate Ca(2+): Val405, Asn408, Leu410, Glu412, Glu415, and Asp418. 14 disulfides stabilise this stretch: Cys406–Cys435, Cys417–Cys430, Cys419–Cys425, Cys429–Cys452, Cys443–Cys449, Cys448–Cys474, Cys461–Cys481, Cys468–Cys500, Cys493–Cys505, Cys512–Cys562, Cys527–Cys573, Cys540–Cys550, Cys557–Cys599, and Cys593–Cys604. The short motif at 467–469 (DCD) is the D/ECD-tripeptide element. N-linked (GlcNAc...) asparagine glycans are attached at residues Asn502 and Asn536.

Belongs to the venom metalloproteinase (M12B) family. P-III subfamily. P-IIIa sub-subfamily. Monomer. Zn(2+) serves as cofactor. Expressed by the venom gland.

The protein localises to the secreted. With respect to regulation, inhibited by EDTA and O-phenanthroline. Not inhibited by PMSF, benzamidine, irreversible serine-proteinase inhibitors and cysteine proteinase inhibitor E-64. Is a potent activator of prothrombin (F2). Does not elicit any hemorrhagic response. Barely inhibits collagen-induced platelet aggregation. Binds neither collagen, nor the jararhagin-monoclonal antibody MAJar3. Hydrolyzes the Aalpha-chain of fibrin and fibrinogen, without affecting the Bbeta- and gamma-chains. Is capable of triggering endothelial pro-inflammatory and procoagulant cell responses, but fails to trigger apoptosis. Induces von Willebrand factor release, and the expression of both ICAM1 and E-selectin (SELE) (without increase in VCAM1) in endothelial cells (HUVEC). Is also able to up-regulate the synthesis of the coagulation factor TF (F3). Enhances nitric oxide (NO) generation, prostacyclin production and interleukin-8 release. This is Zinc metalloproteinase-disintegrin-like ACLD from Agkistrodon contortrix laticinctus (Broad-banded copperhead).